The primary structure comprises 804 residues: Leucine--tRNA ligase (804 aa).

The short motif at 40 to 51 is the 'HIGH' region element; it reads PYPSGAGLHVGH. Positions 574 to 578 match the 'KMSKS' region motif; sequence KMSKS. K577 contacts ATP.

Belongs to the class-I aminoacyl-tRNA synthetase family.

It localises to the cytoplasm. It carries out the reaction tRNA(Leu) + L-leucine + ATP = L-leucyl-tRNA(Leu) + AMP + diphosphate. This is Leucine--tRNA ligase from Shouchella clausii (strain KSM-K16) (Alkalihalobacillus clausii).